A 356-amino-acid chain; its full sequence is Histidinol-phosphate aminotransferase (356 aa).

Lys214 is subject to N6-(pyridoxal phosphate)lysine.

This sequence belongs to the class-II pyridoxal-phosphate-dependent aminotransferase family. Histidinol-phosphate aminotransferase subfamily. As to quaternary structure, homodimer. Requires pyridoxal 5'-phosphate as cofactor.

It catalyses the reaction L-histidinol phosphate + 2-oxoglutarate = 3-(imidazol-4-yl)-2-oxopropyl phosphate + L-glutamate. Its pathway is amino-acid biosynthesis; L-histidine biosynthesis; L-histidine from 5-phospho-alpha-D-ribose 1-diphosphate: step 7/9. In Escherichia coli O17:K52:H18 (strain UMN026 / ExPEC), this protein is Histidinol-phosphate aminotransferase.